The sequence spans 279 residues: MGVRGFFAITRPANSVVAGLAAIVAYLIATGTLVYGVLLLMAVVLLVTAAGNVINDYFDAAIDTINRPDRPIPSGAVSRNAALAWAFSLFLLGLAVSVFTTPLCMGIALVNALLLVLYAARLKSTPFFGNAAVAFLSASIFLFGGAYAGWHALLDMLPIAAITFLAMLARELLKDAEDIEGDRAHGADTLAIRIGVRKTALIAFACTAFAIAASAVPYLWWGGWYLAGIAAVDLVILFAAGRSLGCTDPVSLKATGSTTLLKLGMFASLVVFTLSAVFL.

Helical transmembrane passes span 5 to 25, 27 to 47, 90 to 110, 127 to 147, 148 to 168, 198 to 218, 219 to 239, and 259 to 279; these read GFFA…AIVA, LIAT…VLLV, FLLG…IALV, FFGN…GGAY, AGWH…LAML, KTAL…AVPY, LWWG…ILFA, and TLLK…AVFL.

This sequence belongs to the UbiA prenyltransferase family. DGGGP synthase subfamily. Mg(2+) serves as cofactor.

The protein resides in the cell membrane. It carries out the reaction sn-3-O-(geranylgeranyl)glycerol 1-phosphate + (2E,6E,10E)-geranylgeranyl diphosphate = 2,3-bis-O-(geranylgeranyl)-sn-glycerol 1-phosphate + diphosphate. It participates in membrane lipid metabolism; glycerophospholipid metabolism. In terms of biological role, prenyltransferase that catalyzes the transfer of the geranylgeranyl moiety of geranylgeranyl diphosphate (GGPP) to the C2 hydroxyl of (S)-3-O-geranylgeranylglyceryl phosphate (GGGP). This reaction is the second ether-bond-formation step in the biosynthesis of archaeal membrane lipids. In Methanoregula boonei (strain DSM 21154 / JCM 14090 / 6A8), this protein is Digeranylgeranylglyceryl phosphate synthase.